We begin with the raw amino-acid sequence, 502 residues long: Sodium/proline symporter (502 aa).

13 consecutive transmembrane segments (helical) span residues 6-26, 42-62, 68-88, 127-147, 163-183, 192-212, 235-255, 276-296, 320-340, 371-391, 398-418, 430-450, and 452-472; these read PMLVTFCVYIFGMILIGFIAW, LGPFVTALSAGASDMSGWLLM, IFLSGISESWIAIGLTLGAWI, IISALVILLFFTIYCASGIVA, ALWAGAAATIIYTFIGGFLAV, SLMIFALILTPVMVIVGVGGF, FVAIISLMGWGLGYFGQPHIL, TWMILCLAGAVAVGFFGIAYF, ILFNPWIAGVLLSAILAAVMS, LVWVGRVMVLVVALIAIALAA, LGLVSYAWAGFGAAFGPVVLF, ALAGMIIGAVTVIVWKQYGWL, and LYEIIPGFIFGSLGIVIFSLL.

The protein belongs to the sodium:solute symporter (SSF) (TC 2.A.21) family.

The protein resides in the cell inner membrane. It catalyses the reaction L-proline(in) + Na(+)(in) = L-proline(out) + Na(+)(out). Functionally, catalyzes the sodium-dependent uptake of extracellular L-proline. This chain is Sodium/proline symporter, found in Salmonella typhimurium (strain LT2 / SGSC1412 / ATCC 700720).